The sequence spans 133 residues: Interleukin-4 (133 aa).

The N-terminal stretch at 1–24 (MGLTSQLIPTLVCLLACTSNFVHG) is a signal peptide. 3 disulfide bridges follow: C27/C133, C48/C85, and C70/C105. N62 is a glycosylation site (N-linked (GlcNAc...) asparagine).

The protein belongs to the IL-4/IL-13 family.

The protein resides in the secreted. In terms of biological role, participates in at least several B-cell activation processes as well as of other cell types. It is a costimulator of DNA-synthesis. It induces the expression of class II MHC molecules on resting B-cells. It enhances both secretion and cell surface expression of IgE and IgG1. It also regulates the expression of the low affinity Fc receptor for IgE (CD23) on both lymphocytes and monocytes. Positively regulates IL31RA expression in macrophages. Stimulates autophagy in dendritic cells by interfering with mTORC1 signaling and through the induction of RUFY4. The chain is Interleukin-4 (IL4) from Sus scrofa (Pig).